Consider the following 74-residue polypeptide: Protein DELETION OF SUV3 SUPPRESSOR 1(I) (74 aa).

The interval 35–74 (EKEEVKEVSQQWEDDWDDDDVNDDFSRQLRKELENGTDKK) is disordered. Residues 46–57 (WEDDWDDDDVND) show a composition bias toward acidic residues. Basic and acidic residues predominate over residues 58–74 (DFSRQLRKELENGTDKK).

It belongs to the DSS1/SEM1 family. As to quaternary structure, part of the 26S proteasome. Interacts with BRCA2A and BRCA2B. Interacts with UCH1 and UCH2. Can form a tripartite complex with both RAD51 and BRCA2B or both DMC1 and BRCA2B.

Its function is as follows. Subunit of the 26S proteasome which plays a role in ubiquitin-dependent proteolysis. The polypeptide is Protein DELETION OF SUV3 SUPPRESSOR 1(I) (Arabidopsis thaliana (Mouse-ear cress)).